A 78-amino-acid chain; its full sequence is Calcium/calmodulin-dependent protein kinase II inhibitor 1 (78 aa).

The segment at 41–68 is CAMK2 inhibitory domain; sequence SKRPPKLGQIGRSKRVVIEDDRIDDVLK.

This sequence belongs to the CAMK2N family. As to quaternary structure, interacts with CAMK2B; the presence of Ca(2+)/calmodulin increases the interaction but is not essential. Interacts with CAMK2A; this interaction requires CAMK2A activation by Ca(2+). As to expression, expressed in the brain (at protein level). Expressed in cardiomyocytes but not cardiac fibroblasts (at protein level).

The protein localises to the synapse. It is found in the cell projection. It localises to the dendrite. Its subcellular location is the postsynaptic density. Functionally, potent and specific inhibitor of CaM-kinase II (CAMK2). Plays a role in the maintenance of long-term retrieval-induced memory in response to contextual fear. Modulates blood pressure and vascular reactivity via regulation of CAMK2 activity in addition to regulation of left ventricular mass. Mediates the NLRP3 inflammasome in cardiomyocytes via acting as an inhibitor of the MAPK14/p38 and MAPK8/JNK pathways, thereby regulating ventricular remodeling and cardiac rhythm post-myocardial infarction. Negatively effects insulin sensitivity and promotes lipid formation in adipose tissues independent of CAMK2 signaling. The chain is Calcium/calmodulin-dependent protein kinase II inhibitor 1 (Camk2n1) from Mus musculus (Mouse).